The following is a 230-amino-acid chain: Uracil-DNA glycosylase (230 aa).

D70 (proton acceptor) is an active-site residue.

Belongs to the uracil-DNA glycosylase (UDG) superfamily. UNG family.

The protein localises to the cytoplasm. The catalysed reaction is Hydrolyzes single-stranded DNA or mismatched double-stranded DNA and polynucleotides, releasing free uracil.. Its function is as follows. Excises uracil residues from the DNA which can arise as a result of misincorporation of dUMP residues by DNA polymerase or due to deamination of cytosine. This Pseudomonas fluorescens (strain SBW25) protein is Uracil-DNA glycosylase.